The following is a 322-amino-acid chain: MDSIHGHYHIQLSNYSAGENLQSATLTEGVIGAHRVKVETALSHSNRQKKLSATIKHNQSSRSMLDRKLTSDGKANQRSSFTFSMIMYRMIHFVLSTRVPAVRESVANYGGNINFKFAQTKGAFLHQIIKHSDTASGVCEALCAHWIWSHAQGQSLFDQLYVGGRKGKFQIDTLYSIKQLQIDGCKADVDQDEVTLDWFKKKGISERMIERHCLLRPVDVTGTTESEGPDQLLNAILDTHGIGYGYKKIYLSGQMSAHAIAAYVNEKSGVTFFDPNFGEFHFSDKEKFRKWFTNSFWENSMYHYPLGVGQRFSVLTFDSKEV.

The interval 43–72 (SHSNRQKKLSATIKHNQSSRSMLDRKLTSD) is disordered. Active-site residues include cysteine 139, histidine 258, and aspartate 274.

It belongs to the peptidase C58 family. As to quaternary structure, interacts with human ARHA.

The protein localises to the secreted. Cysteine protease, which is translocated into infected cells and plays a central role in pathogenesis by cleaving the C-terminus end of the human small GTPase RhoA/ARHA, a regulator of cytoskeleton. Once cleaved, ARHA loses its lipid modification, and is released from the cell membrane, leading to the subsequent disruption of actin cytoskeleton of the host cell. This Yersinia enterocolitica protein is Cysteine protease YopT (yopT).